We begin with the raw amino-acid sequence, 171 residues long: Putative F-box protein At1g32020 (171 aa).

Residues 3–49 enclose the F-box domain; the sequence is CDRISTLPDHLVAKIVSYLGIKDSIKTSVLSKRWEFVWLKVVGLDLK.

This chain is Putative F-box protein At1g32020, found in Arabidopsis thaliana (Mouse-ear cress).